The chain runs to 687 residues: MMRAIYLLVVVCWAAAANASSDTVPAEVQTIVKTPGHQYDLYKKMVATISLPANANTEIHKGLNIKRPDNKVTKADIELYYWHKDLKYAVTKFLHLINDDGNKEELTAEEFSNDLQKLAFKVALVECHYQLSPGLRQACYADEILTYGALVLESDDITKFYKHLDNDKDNELKTEEVLKIQHTHKNKDNKIVAEELGAYSGAKKDTVTPEEFEEYVTQESIVDDFRECRSKKATEGTTDYDNVCLTNELVEYVNDDLTEIDISLLYRSVDTNNDNKIIIDELKAFTGITDDVKAKRILELLDMSATTPANAKPVVDYGEWRTYLRSPTVLLQLERDCAMKHNDQLEEINCMYKLLKNLLIDEHDPIWLEAWDLDHVILFEIFDADKDDGKVFKDDLKKIQKNFHFKTEATVTRYMVEADIDKDSFICLEEFDEYMDIPHMVYGTGECILHSRTKPDERGDCFVEETSDVVDNFKFIENAAFDTWFNHYDTNHNNKIEKEADGLLAKFNNDANVLTMFLEETGQGGLTVEPFEFNWYVKQQHLAHAYEDEKIVTALVQKFTAEQITKLHTELIKYINDEMTERDIEDLFDELDHNDDHELTQQDFPDCWNDVKDLLTHIDALIPEGDEDTTVNYLEFWAWINHPNPKKPQELIKKTFETDCTTKHATQKEEVACYVKTFKTKDKFKTA.

The signal sequence occupies residues 1–19 (MMRAIYLLVVVCWAAAANA). EF-hand domains follow at residues 152–187 (LESD…HKNK), 257–292 (LTEI…TDDV), 406–441 (KTEA…PHMV), 476–511 (IENA…NNDA), and 579–614 (MTER…VKDL). Positions 592, 594, 596, 598, and 603 each coordinate Ca(2+).

As to expression, expressed in salivary glands where expression is strongest in type III cells in the posterior lobe of the principal glands (at protein level). Not expressed in midgut, Malpighian tubules or epidermis.

The protein resides in the secreted. Its function is as follows. Binds calcium. During feeding of the phloem sap, protein is injected into sieve tubes of rice plants. This process may suppress the sieve-element clogging and facilitate continuous ingestion from sieve tubes. The chain is Calcium-binding protein SP84 from Nephotettix cincticeps (Green rice leafhopper).